Consider the following 84-residue polypeptide: Beta-mammal/insect toxin Ts1 (84 aa).

An N-terminal signal peptide occupies residues 1 to 20 (MKGMILFISCLLLIGIVVEC). Positions 21 to 82 (KEGYLMDHEG…VWDRATNKCG (62 aa)) constitute an LCN-type CS-alpha/beta domain. 4 disulfide bridges follow: cysteine 31/cysteine 81, cysteine 35/cysteine 57, cysteine 43/cysteine 62, and cysteine 47/cysteine 64. At cysteine 81 the chain carries Cysteine amide.

This sequence belongs to the long (4 C-C) scorpion toxin superfamily. Sodium channel inhibitor family. C-terminal amidation is important for high activity. In terms of tissue distribution, expressed by the venom gland.

Its subcellular location is the secreted. Functionally, voltage-gated sodium channels (Nav) gating-modifier. Acts both as alpha- and beta-toxin, since it affects not only activation but also inactivation of Nav channels. Binds to Nav domain DII and impairs the four Nav channel voltage sensors movements. Depending on Nav channel subtypes tested, can also bind Nav domains DIII (low affinity) and DIV (very low affinity). Acts on almost all the Nav channels tested (mammalian Nav1.2/SCN2A, Nav1.3/SCN3A, Nav1.4/SCN4A, Nav1.5/SCN5A, Nav1.6/SCN8A, Nav1.9/SCN11A, and insect DmNav1). Is highly active against both mammals and insects. Irreversibly modulates DmNav channels. Other Ts1 activities have been studied, such as immunomodulation, antimicrobial activity or exocrine secretion. This toxin exhibits an antifungal activity against filamentous fungi. In vitro, it has an important immunomodulatory effect on macrophages by stimulating the release of pro-inflammatory cytokines. It also shows an activity in exocrine secretion in pancreas, stomach and adrenal gland. The chain is Beta-mammal/insect toxin Ts1 from Tityus serrulatus (Brazilian scorpion).